A 378-amino-acid chain; its full sequence is Succinyl-diaminopimelate desuccinylase (378 aa).

His67 serves as a coordination point for Zn(2+). Residue Asp69 is part of the active site. Asp100 is a binding site for Zn(2+). Glu134 (proton acceptor) is an active-site residue. Residues Glu135, Glu163, and His349 each contribute to the Zn(2+) site.

The protein belongs to the peptidase M20A family. DapE subfamily. As to quaternary structure, homodimer. The cofactor is Zn(2+). It depends on Co(2+) as a cofactor.

The catalysed reaction is N-succinyl-(2S,6S)-2,6-diaminopimelate + H2O = (2S,6S)-2,6-diaminopimelate + succinate. It functions in the pathway amino-acid biosynthesis; L-lysine biosynthesis via DAP pathway; LL-2,6-diaminopimelate from (S)-tetrahydrodipicolinate (succinylase route): step 3/3. Functionally, catalyzes the hydrolysis of N-succinyl-L,L-diaminopimelic acid (SDAP), forming succinate and LL-2,6-diaminopimelate (DAP), an intermediate involved in the bacterial biosynthesis of lysine and meso-diaminopimelic acid, an essential component of bacterial cell walls. The sequence is that of Succinyl-diaminopimelate desuccinylase from Nitrosospira multiformis (strain ATCC 25196 / NCIMB 11849 / C 71).